The primary structure comprises 219 residues: Deoxyribose-phosphate aldolase (219 aa).

Asp-89 acts as the Proton donor/acceptor in catalysis. Residue Lys-151 is the Schiff-base intermediate with acetaldehyde of the active site. The active-site Proton donor/acceptor is Lys-180.

This sequence belongs to the DeoC/FbaB aldolase family. DeoC type 1 subfamily.

The protein localises to the cytoplasm. The enzyme catalyses 2-deoxy-D-ribose 5-phosphate = D-glyceraldehyde 3-phosphate + acetaldehyde. Its pathway is carbohydrate degradation; 2-deoxy-D-ribose 1-phosphate degradation; D-glyceraldehyde 3-phosphate and acetaldehyde from 2-deoxy-alpha-D-ribose 1-phosphate: step 2/2. Functionally, catalyzes a reversible aldol reaction between acetaldehyde and D-glyceraldehyde 3-phosphate to generate 2-deoxy-D-ribose 5-phosphate. The polypeptide is Deoxyribose-phosphate aldolase (Coprothermobacter proteolyticus (strain ATCC 35245 / DSM 5265 / OCM 4 / BT)).